The chain runs to 93 residues: Integration host factor subunit beta (93 aa).

Belongs to the bacterial histone-like protein family. Heterodimer of an alpha and a beta chain.

In terms of biological role, this protein is one of the two subunits of integration host factor, a specific DNA-binding protein that functions in genetic recombination as well as in transcriptional and translational control. The polypeptide is Integration host factor subunit beta (Rhodospirillum centenum (strain ATCC 51521 / SW)).